The primary structure comprises 216 residues: Pyrrolidone-carboxylate peptidase (216 aa).

Catalysis depends on residues E80, C143, and H168.

It belongs to the peptidase C15 family. In terms of assembly, homotetramer.

The protein resides in the cytoplasm. The enzyme catalyses Release of an N-terminal pyroglutamyl group from a polypeptide, the second amino acid generally not being Pro.. Removes 5-oxoproline from various penultimate amino acid residues except L-proline. In Cupriavidus taiwanensis (strain DSM 17343 / BCRC 17206 / CCUG 44338 / CIP 107171 / LMG 19424 / R1) (Ralstonia taiwanensis (strain LMG 19424)), this protein is Pyrrolidone-carboxylate peptidase.